Reading from the N-terminus, the 92-residue chain is Small ribosomal subunit protein bS20 (92 aa).

Belongs to the bacterial ribosomal protein bS20 family.

Binds directly to 16S ribosomal RNA. This Thermosipho africanus (strain TCF52B) protein is Small ribosomal subunit protein bS20.